We begin with the raw amino-acid sequence, 117 residues long: Large ribosomal subunit protein bL19 (117 aa).

This sequence belongs to the bacterial ribosomal protein bL19 family.

In terms of biological role, this protein is located at the 30S-50S ribosomal subunit interface and may play a role in the structure and function of the aminoacyl-tRNA binding site. The polypeptide is Large ribosomal subunit protein bL19 (Vibrio campbellii (strain ATCC BAA-1116)).